The chain runs to 290 residues: L-proline cis-3-hydroxylase 1 (290 aa).

The Fe cation site is built by H107, D109, and H158. R168 contacts 2-oxoglutarate.

Belongs to the L-proline cis-4-/cis-3-hydroxylase family. Homodimer. Fe(2+) is required as a cofactor.

The catalysed reaction is L-proline + 2-oxoglutarate + O2 = cis-3-hydroxy-L-proline + succinate + CO2. With respect to regulation, inhibited by metal ions such as Co(2+), Zn(2+), Ni(2+) or Cu(2+). Is also inhibited by EDTA in vitro. Unlike the procollagen-proline cis-3- and trans-4-hydroxylases from mammals, does not necessarily require L-ascorbate for activity although it does increase the activity of the enzyme. Its function is as follows. Dioxygenase that catalyzes the 2-oxoglutarate-dependent selective hydroxylation of free L-proline to cis-3-hydroxy-L-proline (cis-3-Hyp). D-proline, trans-4-hydroxy-L-proline, cis-4-hydroxy-L-proline, cis-4-hydroxy-D-proline, and 3,4-dehydro-DL-proline are not substrates. The polypeptide is L-proline cis-3-hydroxylase 1 (Streptomyces sp).